We begin with the raw amino-acid sequence, 35 residues long: Conotoxin Cal6.1c (35 aa).

A propeptide spanning residues 1–35 (GLNRPSKRCLAGSAPCEFHKRSTCCSGHCIIWWCA) is cleaved from the precursor. Intrachain disulfides connect cysteine 9–cysteine 25, cysteine 16–cysteine 29, and cysteine 24–cysteine 34.

This sequence belongs to the conotoxin O1 superfamily. Expressed by the venom duct.

It is found in the secreted. Probable neurotoxin with unknown target. Possibly targets ion channels. The polypeptide is Conotoxin Cal6.1c (Californiconus californicus (California cone)).